The following is a 100-amino-acid chain: Large ribosomal subunit protein bL21 (100 aa).

The protein belongs to the bacterial ribosomal protein bL21 family. In terms of assembly, part of the 50S ribosomal subunit. Contacts protein L20.

Functionally, this protein binds to 23S rRNA in the presence of protein L20. The sequence is that of Large ribosomal subunit protein bL21 from Mycoplasmopsis synoviae (strain 53) (Mycoplasma synoviae).